A 215-amino-acid polypeptide reads, in one-letter code: UPF0502 protein YceH (215 aa).

N6-acetyllysine is present on K80.

Belongs to the UPF0502 family.

The chain is UPF0502 protein YceH from Escherichia fergusonii (strain ATCC 35469 / DSM 13698 / CCUG 18766 / IAM 14443 / JCM 21226 / LMG 7866 / NBRC 102419 / NCTC 12128 / CDC 0568-73).